The chain runs to 157 residues: Acetyltransferase PseH (157 aa).

In terms of domain architecture, N-acetyltransferase spans 5 to 152; that stretch reads KNFTELNSQE…YHICLKQSDC (148 aa).

Its function is as follows. Catalyzes the third step in the biosynthesis of pseudaminic acid, a sialic-acid-like sugar that is used to modify flagellin. Mediates N-4 acetylation of UDP-4-amino-4,6-dideoxy-beta-L-AltNAc to form UDP-2,4-diacetamido-2,4,6-trideoxy-beta-L-altropyranose. The sequence is that of Acetyltransferase PseH (pseH) from Campylobacter jejuni subsp. jejuni serotype O:23/36 (strain 81-176).